A 349-amino-acid chain; its full sequence is MAPRILVVDDSAVVRMALSQILGRAGLEVETAIDPLVAMDKMRRARPDAIVLDIEMPRMDGLTFLDRVMAQDPVPVVVCSGLAGPGSEVALHALEHGAVDVIEKPRLGVKGFLEDSARRIVEVVRAATQARLRARVRALRPLPRPPAGAQPRPAPRLAPRAGRAELVVVGASTGGTEALRVLLEAMPADAPAIAVVQHMPEVFTAQFAKRLDKLCRIEVKEAADGDRLLPGRALVAPGNRHLSVKRAGGLVAVVSDGPPVSLHRPSVNVLFHSAARVAGPGTLGILLTGMGDDGADGLLELRRAGAHTVAQDESTSVVFGMPKEAIARGAAVEVLPLPRVASAVLAWAR.

In terms of domain architecture, Response regulatory spans 4–119 (RILVVDDSAV…KGFLEDSARR (116 aa)). The residue at position 53 (Asp-53) is a 4-aspartylphosphate. The CheB-type methylesterase domain occupies 159 to 349 (PRAGRAELVV…VASAVLAWAR (191 aa)). Catalysis depends on residues Ser-172, His-198, and Asp-293.

The protein belongs to the CheB family. Post-translationally, phosphorylated by CheA. Phosphorylation of the N-terminal regulatory domain activates the methylesterase activity.

The protein resides in the cytoplasm. The enzyme catalyses [protein]-L-glutamate 5-O-methyl ester + H2O = L-glutamyl-[protein] + methanol + H(+). The catalysed reaction is L-glutaminyl-[protein] + H2O = L-glutamyl-[protein] + NH4(+). Functionally, involved in chemotaxis. Part of a chemotaxis signal transduction system that modulates chemotaxis in response to various stimuli. Catalyzes the demethylation of specific methylglutamate residues introduced into the chemoreceptors (methyl-accepting chemotaxis proteins or MCP) by CheR. Also mediates the irreversible deamidation of specific glutamine residues to glutamic acid. This is Protein-glutamate methylesterase/protein-glutamine glutaminase 1 from Anaeromyxobacter dehalogenans (strain 2CP-C).